A 246-amino-acid chain; its full sequence is tRNA (guanine-N(1)-)-methyltransferase (246 aa).

Residues Gly-113 and 133–138 each bind S-adenosyl-L-methionine; that span reads IGDYVL.

It belongs to the RNA methyltransferase TrmD family. Homodimer.

The protein resides in the cytoplasm. It carries out the reaction guanosine(37) in tRNA + S-adenosyl-L-methionine = N(1)-methylguanosine(37) in tRNA + S-adenosyl-L-homocysteine + H(+). In terms of biological role, specifically methylates guanosine-37 in various tRNAs. This is tRNA (guanine-N(1)-)-methyltransferase from Yersinia enterocolitica serotype O:8 / biotype 1B (strain NCTC 13174 / 8081).